We begin with the raw amino-acid sequence, 423 residues long: Large ribosomal subunit protein mL37 (423 aa).

The N-terminal 29 residues, 1–29 (MALASGPARRVLARPWGLGLEGCGVPRRG), are a transit peptide targeting the mitochondrion.

Belongs to the mitochondrion-specific ribosomal protein mL37 family. Component of the mitochondrial ribosome large subunit (39S) which comprises a 16S rRNA and about 50 distinct proteins.

It is found in the mitochondrion. This is Large ribosomal subunit protein mL37 (MRPL37) from Bos taurus (Bovine).